The following is a 368-amino-acid chain: Glutaminyl-peptide cyclotransferase (368 aa).

Positions 1–23 are cleaved as a signal peptide; sequence MAGERRDSKAAAFFCLAWALCLA. An N-linked (GlcNAc...) asparagine glycan is attached at N53. C143 and C169 are disulfide-bonded. A Zn(2+)-binding site is contributed by D164. Residue E207 is the Proton acceptor of the active site. Residue E208 coordinates Zn(2+). Residue D254 is the Proton acceptor of the active site. N292 carries N-linked (GlcNAc...) asparagine glycosylation. H336 provides a ligand contact to Zn(2+). N-linked (GlcNAc...) asparagine glycosylation occurs at N352.

This sequence belongs to the glutaminyl-peptide cyclotransferase family. Expressed by the venom gland.

It localises to the secreted. The catalysed reaction is N-terminal L-glutaminyl-[peptide] = N-terminal 5-oxo-L-prolyl-[peptide] + NH4(+). In terms of biological role, responsible for the biosynthesis of pyroglutamyl peptides. Has a bias against acidic and tryptophan residues adjacent to the N-terminal glutaminyl residue and a lack of importance of chain length after the second residue. Also catalyzes N-terminal pyroglutamate formation. In Boiga irregularis (Brown tree snake), this protein is Glutaminyl-peptide cyclotransferase (QPCT).